The primary structure comprises 396 residues: Odorant receptor 49a (396 aa).

Over 1–6 (MEKLRS) the chain is Cytoplasmic. A helical membrane pass occupies residues 7 to 27 (YEDFIFMANMMFKTLGYDLFH). Topologically, residues 28-34 (TPKPWWR) are extracellular. A helical transmembrane segment spans residues 35–55 (YLLVRGYFVLCTISNFYEASM). Over 56–70 (VTTRIIEWESLAGSP) the chain is Cytoplasmic. A helical membrane pass occupies residues 71–91 (SKIMRQGLHFFYMLSSQLKFI). At 92–141 (TFMINRKRLLQLSHRLKELYPHKEQNQRKYEVNKYYLSCSTRNVLYVYYF) the chain is on the extracellular side. The chain crosses the membrane as a helical span at residues 142 to 162 (VMVVMALEPLVQSCIMYLIGF). Residues 163 to 209 (GKADFTYKRIFPTRLTFDSEKPLGYVLAYVIDFTYSQFIVNVSLGTD) are Cytoplasmic-facing. Residues 210-230 (LWMMCVSSQISMHLGYLANML) form a helical membrane-spanning segment. Residues 231–266 (ASIRPSPETEQQDCDFLASIIKRHQLMIRLQKDVNY) lie on the Extracellular side of the membrane. Residues 267-287 (VFGLLLASNLFTTSCLLCCMA) form a helical membrane-spanning segment. The Cytoplasmic portion of the chain corresponds to 288-296 (YYTVVEGFN). The helical transmembrane segment at 297-317 (WEGISYMMLFASVAAQFYVVS) threads the bilayer. Topologically, residues 318–396 (SHGQMLIDLS…FAVIRQTVEK (79 aa)) are extracellular.

The protein belongs to the insect chemoreceptor superfamily. Heteromeric odorant receptor channel (TC 1.A.69) family. Or49a subfamily. In terms of assembly, interacts with Orco. Complexes exist early in the endomembrane system in olfactory sensory neurons (OSNs), coupling these complexes to the conserved ciliary trafficking pathway.

The protein localises to the cell membrane. Functionally, odorant receptor which mediates acceptance or avoidance behavior, depending on its substrates. The odorant receptor repertoire encodes a large collection of odor stimuli that vary widely in identity, intensity, and duration. May form a complex with Orco to form odorant-sensing units, providing sensitive and prolonged odorant signaling and calcium permeability. Involved in the behavioral responses to butanol and 2-heptanone. The sequence is that of Odorant receptor 49a (Or49a) from Drosophila melanogaster (Fruit fly).